We begin with the raw amino-acid sequence, 173 residues long: Bifunctional protein PyrR (173 aa).

Positions 93–105 (IILVDDVLYTGRT) match the PRPP-binding motif.

Belongs to the purine/pyrimidine phosphoribosyltransferase family. PyrR subfamily. As to quaternary structure, homodimer and homohexamer; in equilibrium.

The enzyme catalyses UMP + diphosphate = 5-phospho-alpha-D-ribose 1-diphosphate + uracil. Functionally, regulates transcriptional attenuation of the pyrimidine nucleotide (pyr) operon by binding in a uridine-dependent manner to specific sites on pyr mRNA. This disrupts an antiterminator hairpin in the RNA and favors formation of a downstream transcription terminator, leading to a reduced expression of downstream genes. In terms of biological role, also displays a weak uracil phosphoribosyltransferase activity which is not physiologically significant. This Streptococcus equi subsp. zooepidemicus (strain H70) protein is Bifunctional protein PyrR.